Here is a 551-residue protein sequence, read N- to C-terminus: ATP-dependent DNA helicase XPD (551 aa).

One can recognise a Helicase ATP-binding domain in the interval 1–228; it reads MLKLRDWQEK…KLLNQLREVV (228 aa). 29-36 contributes to the ATP binding site; that stretch reads APTGSGKT. Residues C88, C102, C105, and C137 each contribute to the [4Fe-4S] cluster site. The DEAH box motif lies at 180-183; the sequence is DEAH.

This sequence belongs to the helicase family. RAD3/XPD subfamily. Monomer. It depends on [4Fe-4S] cluster as a cofactor.

The enzyme catalyses Couples ATP hydrolysis with the unwinding of duplex DNA at the replication fork by translocating in the 5'-3' direction. This creates two antiparallel DNA single strands (ssDNA). The leading ssDNA polymer is the template for DNA polymerase III holoenzyme which synthesizes a continuous strand.. It carries out the reaction ATP + H2O = ADP + phosphate + H(+). Functionally, ATP-dependent 5'-3' DNA helicase. Thought to be involved in nucleotide excision repair (NER) of DNA. The chain is ATP-dependent DNA helicase XPD from Sulfolobus acidocaldarius (strain ATCC 33909 / DSM 639 / JCM 8929 / NBRC 15157 / NCIMB 11770).